Consider the following 75-residue polypeptide: MARFFRRRKFCRFTAEGVKSIDYKDLDTLKAYVSETGKIVPSRITGTKAKYQRQLATAIKRARFIALLPYTDSHE.

It belongs to the bacterial ribosomal protein bS18 family. In terms of assembly, part of the 30S ribosomal subunit. Forms a tight heterodimer with protein bS6.

Binds as a heterodimer with protein bS6 to the central domain of the 16S rRNA, where it helps stabilize the platform of the 30S subunit. The polypeptide is Small ribosomal subunit protein bS18 (Saccharophagus degradans (strain 2-40 / ATCC 43961 / DSM 17024)).